The sequence spans 360 residues: UDP-N-acetylglucosamine--N-acetylmuramyl-(pentapeptide) pyrophosphoryl-undecaprenol N-acetylglucosamine transferase (360 aa).

2 residues coordinate UDP-N-acetyl-alpha-D-glucosamine: Ser198 and Gln289.

Belongs to the glycosyltransferase 28 family. MurG subfamily.

The protein localises to the cell membrane. It catalyses the reaction Mur2Ac(oyl-L-Ala-gamma-D-Glu-L-Lys-D-Ala-D-Ala)-di-trans,octa-cis-undecaprenyl diphosphate + UDP-N-acetyl-alpha-D-glucosamine = beta-D-GlcNAc-(1-&gt;4)-Mur2Ac(oyl-L-Ala-gamma-D-Glu-L-Lys-D-Ala-D-Ala)-di-trans,octa-cis-undecaprenyl diphosphate + UDP + H(+). It participates in cell wall biogenesis; peptidoglycan biosynthesis. Cell wall formation. Catalyzes the transfer of a GlcNAc subunit on undecaprenyl-pyrophosphoryl-MurNAc-pentapeptide (lipid intermediate I) to form undecaprenyl-pyrophosphoryl-MurNAc-(pentapeptide)GlcNAc (lipid intermediate II). The protein is UDP-N-acetylglucosamine--N-acetylmuramyl-(pentapeptide) pyrophosphoryl-undecaprenol N-acetylglucosamine transferase of Streptococcus pyogenes serotype M49 (strain NZ131).